Reading from the N-terminus, the 325-residue chain is Elongation factor P--(R)-beta-lysine ligase (325 aa).

Position 76–78 (Ser76–Glu78) interacts with substrate. Residues Arg100–Glu102 and Asn109 contribute to the ATP site. Residue Tyr118 participates in substrate binding. Position 244–245 (Glu244–Leu245) interacts with ATP. Glu251 lines the substrate pocket. Residue Gly300 participates in ATP binding.

This sequence belongs to the class-II aminoacyl-tRNA synthetase family. EpmA subfamily. Homodimer.

It catalyses the reaction D-beta-lysine + L-lysyl-[protein] + ATP = N(6)-((3R)-3,6-diaminohexanoyl)-L-lysyl-[protein] + AMP + diphosphate + H(+). In terms of biological role, with EpmB is involved in the beta-lysylation step of the post-translational modification of translation elongation factor P (EF-P) on 'Lys-34'. Catalyzes the ATP-dependent activation of (R)-beta-lysine produced by EpmB, forming a lysyl-adenylate, from which the beta-lysyl moiety is then transferred to the epsilon-amino group of EF-P 'Lys-34'. This chain is Elongation factor P--(R)-beta-lysine ligase, found in Salmonella arizonae (strain ATCC BAA-731 / CDC346-86 / RSK2980).